We begin with the raw amino-acid sequence, 118 residues long: Large ribosomal subunit protein bL20 (118 aa).

Belongs to the bacterial ribosomal protein bL20 family.

Functionally, binds directly to 23S ribosomal RNA and is necessary for the in vitro assembly process of the 50S ribosomal subunit. It is not involved in the protein synthesizing functions of that subunit. In Desulfotalea psychrophila (strain LSv54 / DSM 12343), this protein is Large ribosomal subunit protein bL20.